Here is a 129-residue protein sequence, read N- to C-terminus: M-zodatoxin-Lt8b (129 aa).

Residues 1 to 20 form the signal peptide; it reads MKYFVVALALVAAFACIAES. A propeptide spanning residues 21 to 60 is cleaved from the precursor; the sequence is KPAESEHELAEVEEENELADLEDAVWLEHLADLSDLEEAR. The short motif at 57 to 60 is the Processing quadruplet motif element; the sequence is EEAR.

In terms of processing, cleavage of the propeptide depends on the processing quadruplet motif (XXXR, with at least one of X being E). As to expression, expressed by the venom gland.

The protein localises to the secreted. Functionally, insecticidal, cytolytic and antimicrobial peptide. Forms voltage-dependent, ion-permeable channels in membranes. At high concentration causes cell membrane lysis. The chain is M-zodatoxin-Lt8b (cit 1-2) from Lachesana tarabaevi (Spider).